The chain runs to 473 residues: GTPase Der (473 aa).

EngA-type G domains follow at residues P5–V170 and L178–M351. GTP is bound by residues G11–S18, D58–I62, N123–D126, G184–S191, D231–V235, and N296–D299. The KH-like domain occupies F352 to T436. Residues P438–K473 are disordered. Positions Q459–K473 are enriched in basic residues.

It belongs to the TRAFAC class TrmE-Era-EngA-EngB-Septin-like GTPase superfamily. EngA (Der) GTPase family. As to quaternary structure, associates with the 50S ribosomal subunit.

Functionally, GTPase that plays an essential role in the late steps of ribosome biogenesis. This chain is GTPase Der, found in Psychrobacter sp. (strain PRwf-1).